The following is a 622-amino-acid chain: Kinesin-like protein KIFC1 (622 aa).

The segment at 1–88 (MKEALEPAKK…KRPGKRPDWD (88 aa)) is disordered. The segment covering 32–41 (SSLSQPQGPT) has biased composition (polar residues). A coiled-coil region spans residues 95-264 (DLTEELKCYR…QELKGNIRVF (170 aa)). One can recognise a Kinesin motor domain in the interval 260–612 (NIRVFCRVRP…LRFASKVNQC (353 aa)). A disordered region spans residues 279–323 (PGFLLFPHGPAGPSDPPTRLSLSRSDDRRSTLTRAPAPTTRHDFS). Phosphothreonine is present on Thr309. 360–367 (GQTGSGKT) contributes to the ATP binding site.

Belongs to the TRAFAC class myosin-kinesin ATPase superfamily. Kinesin family. NCD subfamily. As to quaternary structure, binds NUBP1 and NUBP2. Interacts with PPP1R42.

It is found in the nucleus. Its subcellular location is the cytoplasm. The protein localises to the cytoskeleton. It localises to the microtubule organizing center. The protein resides in the centrosome. It is found in the spindle. Its subcellular location is the early endosome. Its function is as follows. Minus end-directed microtubule-dependent motor required for bipolar spindle formation. May contribute to movement of early endocytic vesicles. Regulates cilium formation and structure. This chain is Kinesin-like protein KIFC1, found in Cricetulus griseus (Chinese hamster).